We begin with the raw amino-acid sequence, 749 residues long: Catalase-peroxidase 2 (749 aa).

Residues 1–27 (MFKRTIPLFAAFTLAISPSIFPNYAHA) form the signal peptide. Residues 107–229 (WHAAGTYRIY…LAATVMGLIY (123 aa)) constitute a cross-link (tryptophyl-tyrosyl-methioninium (Trp-Tyr) (with M-255)). Residue H108 is the Proton acceptor of the active site. The segment at residues 229-255 (YVNPEGPNGVPDPLAAAEKIRETFGRM) is a cross-link (tryptophyl-tyrosyl-methioninium (Tyr-Met) (with W-107)). H270 provides a ligand contact to heme b.

The protein belongs to the peroxidase family. Peroxidase/catalase subfamily. In terms of assembly, homodimer or homotetramer. Heme b serves as cofactor. Post-translationally, formation of the three residue Trp-Tyr-Met cross-link is important for the catalase, but not the peroxidase activity of the enzyme.

The catalysed reaction is H2O2 + AH2 = A + 2 H2O. It carries out the reaction 2 H2O2 = O2 + 2 H2O. In terms of biological role, bifunctional enzyme with both catalase and broad-spectrum peroxidase activity. This Legionella pneumophila (strain Lens) protein is Catalase-peroxidase 2.